Consider the following 302-residue polypeptide: Dihydroorotate dehydrogenase B (NAD(+)), catalytic subunit (302 aa).

FMN-binding positions include Ser-20 and 44–45 (KG). Substrate is bound by residues Lys-44 and 68–72 (NSVGL). FMN is bound by residues Asn-98 and Asn-125. Position 125 (Asn-125) interacts with substrate. Catalysis depends on Cys-128, which acts as the Nucleophile. FMN-binding residues include Lys-163 and Ile-189. 190–191 (NT) lines the substrate pocket. FMN contacts are provided by residues Gly-215, 241 to 242 (GG), and 263 to 264 (GT).

Belongs to the dihydroorotate dehydrogenase family. Type 1 subfamily. As to quaternary structure, heterotetramer of 2 PyrK and 2 PyrD type B subunits. The cofactor is FMN.

It is found in the cytoplasm. It carries out the reaction (S)-dihydroorotate + NAD(+) = orotate + NADH + H(+). It functions in the pathway pyrimidine metabolism; UMP biosynthesis via de novo pathway; orotate from (S)-dihydroorotate (NAD(+) route): step 1/1. Functionally, catalyzes the conversion of dihydroorotate to orotate with NAD(+) as electron acceptor. This chain is Dihydroorotate dehydrogenase B (NAD(+)), catalytic subunit (pyrD), found in Thermoanaerobacter sp. (strain X514).